The following is a 368-amino-acid chain: Glutamate 5-kinase (368 aa).

An ATP-binding site is contributed by K10. Positions 50, 137, and 149 each coordinate substrate. 169–170 (TD) contributes to the ATP binding site. Residues 276-354 (RGTLVLDDGA…ESIVRELGYM (79 aa)) form the PUA domain.

This sequence belongs to the glutamate 5-kinase family.

The protein localises to the cytoplasm. The enzyme catalyses L-glutamate + ATP = L-glutamyl 5-phosphate + ADP. It functions in the pathway amino-acid biosynthesis; L-proline biosynthesis; L-glutamate 5-semialdehyde from L-glutamate: step 1/2. Its function is as follows. Catalyzes the transfer of a phosphate group to glutamate to form L-glutamate 5-phosphate. The protein is Glutamate 5-kinase of Pseudomonas savastanoi pv. phaseolicola (strain 1448A / Race 6) (Pseudomonas syringae pv. phaseolicola (strain 1448A / Race 6)).